A 48-amino-acid polypeptide reads, in one-letter code: Toxin CSTX-14 (48 aa).

Intrachain disulfides connect Cys-3–Cys-18, Cys-10–Cys-27, Cys-17–Cys-42, and Cys-29–Cys-40.

Belongs to the neurotoxin 19 (CSTX) family. 12 subfamily. In terms of assembly, heterodimer of A and B chains; disulfide-linked. Post-translationally, contains 4 disulfide bonds. As to expression, expressed by the venom gland.

The protein resides in the secreted. This is Toxin CSTX-14 from Cupiennius salei (American wandering spider).